The chain runs to 200 residues: V-set and transmembrane domain-containing protein 5 (200 aa).

The N-terminal stretch at 1–28 (MRPLPSGRRKTRGISLGLFALCLAAARC) is a signal peptide. Residues 29 to 147 (LQSQGVSLYI…VSEILYEDLH (119 aa)) are Extracellular-facing. Residues 37-139 (YIPQATINAT…QFGTIVLHVS (103 aa)) form the Ig-like C2-type domain. A glycan (N-linked (GlcNAc...) asparagine) is linked at N102. A helical membrane pass occupies residues 148 to 168 (FVAVILAFLAAVAAVLISLMW). At 169-200 (VCNKCAYKFQRKRRHKLKESTTEEIELEDVEC) the chain is on the cytoplasmic side. Residues 170–186 (CNKCAYKFQRKRRHKLK) are important for CDC42-dependent filopodia induction.

Can homooligomerize through cis interactions within the same cell membrane. Post-translationally, N-glycosylated.

The protein localises to the cell membrane. The protein resides in the cell projection. It is found in the dendrite. Its subcellular location is the axon. In terms of biological role, cell adhesion-like membrane protein of the central nervous system (CNS) which modulates both the position and complexity of central neurons by altering their membrane morphology and dynamics. Involved in the formation of neuronal dendrites and protrusions including dendritic filopodia. In synaptogenesis, regulates synapse formation by altering dendritic spine morphology and actin distribution. Promotes formation of unstable neuronal spines such as thin and branched types. Regulates neuronal morphogenesis and migration during cortical development in the brain. The chain is V-set and transmembrane domain-containing protein 5 (VSTM5) from Homo sapiens (Human).